The chain runs to 441 residues: Homoserine dehydrogenase (441 aa).

2 residues coordinate NADP(+): Asn-17 and Val-18. The NAD(+) site is built by Val-18 and Gly-47. Val-18 contacts NADPH. NADP(+)-binding residues include Arg-49, Arg-50, and Lys-107. Arg-49 provides a ligand contact to NADPH. Lys-107 is a binding site for NADPH. The Na(+) site is built by Glu-131, Val-134, Gly-136, and Ile-138. Positions 189 and 192 each coordinate NADP(+). Residues Glu-192 and Asp-203 each coordinate L-homoserine. Lys-207 (proton donor) is an active-site residue. Gly-309 lines the NADP(+) pocket. Gly-309 is an NAD(+) binding site. Gly-309 contacts NADPH. One can recognise an ACT domain in the interval 356–435; that stretch reads YVSMNVADKP…VVQGVTSVLR (80 aa).

It belongs to the homoserine dehydrogenase family. It depends on a metal cation as a cofactor.

The catalysed reaction is L-homoserine + NADP(+) = L-aspartate 4-semialdehyde + NADPH + H(+). The enzyme catalyses L-homoserine + NAD(+) = L-aspartate 4-semialdehyde + NADH + H(+). The protein operates within amino-acid biosynthesis; L-methionine biosynthesis via de novo pathway; L-homoserine from L-aspartate: step 3/3. It functions in the pathway amino-acid biosynthesis; L-threonine biosynthesis; L-threonine from L-aspartate: step 3/5. Its function is as follows. Catalyzes the conversion of L-aspartate-beta-semialdehyde (L-Asa) to L-homoserine (L-Hse), the third step in the biosynthesis of threonine and methionine from aspartate. In Mycobacterium leprae (strain TN), this protein is Homoserine dehydrogenase (hom).